Reading from the N-terminus, the 212-residue chain is ATP-dependent Clp protease proteolytic subunit (212 aa).

The Nucleophile role is filled by Ser113. The active site involves His138.

The protein belongs to the peptidase S14 family. In terms of assembly, fourteen ClpP subunits assemble into 2 heptameric rings which stack back to back to give a disk-like structure with a central cavity, resembling the structure of eukaryotic proteasomes.

Its subcellular location is the cytoplasm. The catalysed reaction is Hydrolysis of proteins to small peptides in the presence of ATP and magnesium. alpha-casein is the usual test substrate. In the absence of ATP, only oligopeptides shorter than five residues are hydrolyzed (such as succinyl-Leu-Tyr-|-NHMec, and Leu-Tyr-Leu-|-Tyr-Trp, in which cleavage of the -Tyr-|-Leu- and -Tyr-|-Trp bonds also occurs).. Its function is as follows. Cleaves peptides in various proteins in a process that requires ATP hydrolysis. Has a chymotrypsin-like activity. Plays a major role in the degradation of misfolded proteins. This chain is ATP-dependent Clp protease proteolytic subunit, found in Saccharophagus degradans (strain 2-40 / ATCC 43961 / DSM 17024).